The sequence spans 254 residues: Nickel import ATP-binding protein NikD (254 aa).

One can recognise an ABC transporter domain in the interval 2–241 (PQQIELRNIA…PKHAVTRSLV (240 aa)). 36–43 (GGSGSGKS) is a binding site for ATP.

Belongs to the ABC transporter superfamily. Nickel importer (TC 3.A.1.5.3) family. The complex is composed of two ATP-binding proteins (NikD and NikE), two transmembrane proteins (NikB and NikC) and a solute-binding protein (NikA).

The protein localises to the cell inner membrane. The catalysed reaction is Ni(2+)(out) + ATP + H2O = Ni(2+)(in) + ADP + phosphate + H(+). Functionally, part of the ABC transporter complex NikABCDE involved in nickel import. Responsible for energy coupling to the transport system. The sequence is that of Nickel import ATP-binding protein NikD from Escherichia coli (strain UTI89 / UPEC).